The sequence spans 431 residues: Na(+)-translocating NADH-quinone reductase subunit F (431 aa).

A helical transmembrane segment spans residues 10–30 (ISIASLVFCVIGLILSGVILI). One can recognise a 2Fe-2S ferredoxin-type domain in the interval 41 to 133 (CKLKINNDDS…DMNLEIEERY (93 aa)). [2Fe-2S] cluster-binding residues include C76, C82, C85, and C117. Positions 136 to 286 (ASSWEGTVVS…SGPYGESFMK (151 aa)) constitute an FAD-binding FR-type domain.

It belongs to the NqrF family. As to quaternary structure, composed of six subunits; NqrA, NqrB, NqrC, NqrD, NqrE and NqrF. [2Fe-2S] cluster is required as a cofactor. It depends on FAD as a cofactor.

The protein localises to the cell inner membrane. It catalyses the reaction a ubiquinone + n Na(+)(in) + NADH + H(+) = a ubiquinol + n Na(+)(out) + NAD(+). Functionally, NQR complex catalyzes the reduction of ubiquinone-1 to ubiquinol by two successive reactions, coupled with the transport of Na(+) ions from the cytoplasm to the periplasm. The first step is catalyzed by NqrF, which accepts electrons from NADH and reduces ubiquinone-1 to ubisemiquinone by a one-electron transfer pathway. The chain is Na(+)-translocating NADH-quinone reductase subunit F from Chlamydia felis (strain Fe/C-56) (Chlamydophila felis).